Consider the following 98-residue polypeptide: Aspartyl/glutamyl-tRNA(Asn/Gln) amidotransferase subunit C (98 aa).

The protein belongs to the GatC family. In terms of assembly, heterotrimer of A, B and C subunits.

The catalysed reaction is L-glutamyl-tRNA(Gln) + L-glutamine + ATP + H2O = L-glutaminyl-tRNA(Gln) + L-glutamate + ADP + phosphate + H(+). It catalyses the reaction L-aspartyl-tRNA(Asn) + L-glutamine + ATP + H2O = L-asparaginyl-tRNA(Asn) + L-glutamate + ADP + phosphate + 2 H(+). In terms of biological role, allows the formation of correctly charged Asn-tRNA(Asn) or Gln-tRNA(Gln) through the transamidation of misacylated Asp-tRNA(Asn) or Glu-tRNA(Gln) in organisms which lack either or both of asparaginyl-tRNA or glutaminyl-tRNA synthetases. The reaction takes place in the presence of glutamine and ATP through an activated phospho-Asp-tRNA(Asn) or phospho-Glu-tRNA(Gln). The protein is Aspartyl/glutamyl-tRNA(Asn/Gln) amidotransferase subunit C of Microcystis aeruginosa (strain NIES-843 / IAM M-2473).